A 282-amino-acid chain; its full sequence is Nucleotide-binding protein Ping_2894 (282 aa).

Residue G8 to T15 participates in ATP binding. A GTP-binding site is contributed by D56–N59.

The protein belongs to the RapZ-like family.

In terms of biological role, displays ATPase and GTPase activities. This Psychromonas ingrahamii (strain DSM 17664 / CCUG 51855 / 37) protein is Nucleotide-binding protein Ping_2894.